Consider the following 90-residue polypeptide: Phosphoribosyl-ATP pyrophosphatase (90 aa).

It belongs to the PRA-PH family.

The protein localises to the cytoplasm. The enzyme catalyses 1-(5-phospho-beta-D-ribosyl)-ATP + H2O = 1-(5-phospho-beta-D-ribosyl)-5'-AMP + diphosphate + H(+). It participates in amino-acid biosynthesis; L-histidine biosynthesis; L-histidine from 5-phospho-alpha-D-ribose 1-diphosphate: step 2/9. The chain is Phosphoribosyl-ATP pyrophosphatase from Streptomyces avermitilis (strain ATCC 31267 / DSM 46492 / JCM 5070 / NBRC 14893 / NCIMB 12804 / NRRL 8165 / MA-4680).